The chain runs to 88 residues: RQC P-site tRNA stabilizing factor (88 aa).

Positions 1–67 (MRLDKFLKVS…VEITNVKETV (67 aa)) constitute an S4 RNA-binding domain.

This sequence belongs to the RqcP family. Associates with stalled 50S ribosomal subunits. Binds to RqcH, 23S rRNA and the P-site tRNA. Does not require RqcH for association with 50S subunits.

Its function is as follows. Key component of the ribosome quality control system (RQC), a ribosome-associated complex that mediates the extraction of incompletely synthesized nascent chains from stalled ribosomes and their subsequent degradation. RqcH recruits Ala-charged tRNA, and with RqcP directs the elongation of stalled nascent chains on 50S ribosomal subunits, leading to non-templated C-terminal alanine extensions (Ala tail). The Ala tail promotes nascent chain degradation. RqcP is associated with the translocation-like movement of the peptidyl-tRNA from the A-site into the P-site. The protein is RQC P-site tRNA stabilizing factor of Halalkalibacterium halodurans (strain ATCC BAA-125 / DSM 18197 / FERM 7344 / JCM 9153 / C-125) (Bacillus halodurans).